We begin with the raw amino-acid sequence, 386 residues long: GTPase Obg (386 aa).

The Obg domain occupies 1–159; the sequence is MKFIDEARIE…RTLKLELKVL (159 aa). In terms of domain architecture, OBG-type G spans 160-348; it reads ADVGLLGMPN…LTFAIMSYLD (189 aa). Residues 166–173, 191–195, 213–216, 284–287, and 329–331 each bind GTP; these read GMPNAGKS, FTTLH, DIPG, NKVD, and SAL. Mg(2+) is bound by residues S173 and T193.

The protein belongs to the TRAFAC class OBG-HflX-like GTPase superfamily. OBG GTPase family. As to quaternary structure, monomer. Requires Mg(2+) as cofactor.

It is found in the cytoplasm. An essential GTPase which binds GTP, GDP and possibly (p)ppGpp with moderate affinity, with high nucleotide exchange rates and a fairly low GTP hydrolysis rate. Plays a role in control of the cell cycle, stress response, ribosome biogenesis and in those bacteria that undergo differentiation, in morphogenesis control. This chain is GTPase Obg, found in Chromobacterium violaceum (strain ATCC 12472 / DSM 30191 / JCM 1249 / CCUG 213 / NBRC 12614 / NCIMB 9131 / NCTC 9757 / MK).